We begin with the raw amino-acid sequence, 352 residues long: MMKCLLVSSVEGYSGKSGIIIALGLKLREMGYEVGYFKALGVNTVKVGDRAVEEDSLITAKILGVEEDVCPVVLDRPYIDFATSVDPVVLRKAVLDRFTEVSEGKDVVIVEGSQNYRTGVAVGIDDASVAKMLSAKVLLVGKYVNDFVVDEVLAAKSAFGTMLEKVVFNQVSGYKMSYIEGIARKVLNEAGLDIVGAIPRNPVLAGLSVEEIREAVSGEYLIEPREEKMVEQVVIGAMSPQSALRYLREARNAALVTGGDRSDLLLTALEMPNVRCLILTGNLEPVQLVLTKAEERGVPVILTGHDTLTAVSRLESVFGRTRIRGEPKVGIMRELFESHVNVKTIIEYLGLD.

To Synechocystis PCC 6803 slr0039.

This is an uncharacterized protein from Archaeoglobus fulgidus (strain ATCC 49558 / DSM 4304 / JCM 9628 / NBRC 100126 / VC-16).